Reading from the N-terminus, the 390-residue chain is Neuromedin-B receptor (390 aa).

Over 1–41 (MPPRSLSNLSFPTEANESELVPEVWEKDFLPDSDGTTAELV) the chain is Extracellular. N-linked (GlcNAc...) asparagine glycosylation is found at asparagine 8 and asparagine 16. The chain crosses the membrane as a helical span at residues 42–65 (IRCVIPSLYLIIISVGLLGNIMLV). Over 66-79 (KIFLTNSAMRNVPN) the chain is Cytoplasmic. A helical membrane pass occupies residues 80-99 (IFISNLAAGDLLLLLTCVPV). The Extracellular portion of the chain corresponds to 100 to 117 (DASRYFFDEWVFGKLGCK). Residues cysteine 116 and cysteine 198 are joined by a disulfide bond. A helical transmembrane segment spans residues 118–139 (LIPAIQLTSVGVSVFTLTALSA). Residues 140-156 (DRYRAIVNPMDMQTSGV) lie on the Cytoplasmic side of the membrane. A helical transmembrane segment spans residues 157–177 (LLWTSLKAVGIWVVSVLLAVP). At 178 to 211 (EAVFSEVARIGSLDNSSFTACIPYPQTDELHPKI) the chain is on the extracellular side. Asparagine 192 carries N-linked (GlcNAc...) asparagine glycosylation. Residues 212–235 (HSVLIFLVYFLIPLVIISIYYYHI) form a helical membrane-spanning segment. The Cytoplasmic portion of the chain corresponds to 236-266 (AKTLIKSAHNLPGEYNEHTKKQMETRKRLAK). Residues 267 to 287 (IVLVFVGCFVFCWFPNHVLYL) form a helical membrane-spanning segment. The Extracellular segment spans residues 288 to 299 (YRSFNYKEIDPS). The chain crosses the membrane as a helical span at residues 300 to 327 (LGHMIVTLVARVLSFSNSCVNPFALYLL). Residues 328-390 (SESFRKHFNS…GHSTKQEIAL (63 aa)) lie on the Cytoplasmic side of the membrane. Cysteine 341 carries S-palmitoyl cysteine lipidation. Serine 352 is modified (phosphoserine).

It belongs to the G-protein coupled receptor 1 family. Expressed in a subset of neurons of the pre-Botzinger complex. Within the pre-Botzinger complex, there is some overlap with neurons expressing Grpr with some cells expressing only Grpr or Nmbr while some cells express both. Expressed in dorsal root ganglion neurons and mast cells. Expressed in lung.

The protein resides in the cell membrane. Its function is as follows. Receptor for neuromedin-B. Contributes to the maintenance of basal sigh rate through signaling in the pre-Botzinger complex, a cluster of several thousand neurons in the ventrolateral medulla responsible for inspiration during respiratory activity. Contributes to the induction of sneezing following exposure to chemical irritants or allergens which causes release of NMB by nasal sensory neurons and activation of NMBR-expressing neurons in the sneeze-evoking region of the brainstem. These in turn activate neurons of the caudal ventral respiratory group, giving rise to the sneezing response. Contributes to induction of acute itch, possibly through its activation on dorsal root ganglion neurons by the NMB peptide. Plays a role in the innate immune response to influenza A virus infection by enhancing interferon alpha expression and reducing expression of IL6. Plays a role in CSF1-induced proliferation of osteoclast precursors by contributing to the positive regulation of the expression of the CSF1 receptor CSF1R. This chain is Neuromedin-B receptor (Nmbr), found in Mus musculus (Mouse).